The sequence spans 292 residues: Phosphatidylglycerol--prolipoprotein diacylglyceryl transferase (292 aa).

4 consecutive transmembrane segments (helical) span residues 18–38 (LFGATFALRWYALAYIAGLLI), 67–87 (LLTWVILGVILGGRLGFVLFY), 105–125 (GGMSFHGGFLGVMVAVIAFCL), and 129–149 (ISILPVADLLAAATPPGLFLG). Residue Arg150 participates in a 1,2-diacyl-sn-glycero-3-phospho-(1'-sn-glycerol) binding. The next 3 membrane-spanning stretches (helical) occupy residues 193–213 (QLYEAALEGIVLFAILAILIW), 222–242 (GAVTGAFLAGYGCARFLVEFV), and 266–286 (GLTMGQILSLPMILLGLYFML).

Belongs to the Lgt family.

The protein localises to the cell inner membrane. It catalyses the reaction L-cysteinyl-[prolipoprotein] + a 1,2-diacyl-sn-glycero-3-phospho-(1'-sn-glycerol) = an S-1,2-diacyl-sn-glyceryl-L-cysteinyl-[prolipoprotein] + sn-glycerol 1-phosphate + H(+). It functions in the pathway protein modification; lipoprotein biosynthesis (diacylglyceryl transfer). In terms of biological role, catalyzes the transfer of the diacylglyceryl group from phosphatidylglycerol to the sulfhydryl group of the N-terminal cysteine of a prolipoprotein, the first step in the formation of mature lipoproteins. The sequence is that of Phosphatidylglycerol--prolipoprotein diacylglyceryl transferase from Cereibacter sphaeroides (strain ATCC 17025 / ATH 2.4.3) (Rhodobacter sphaeroides).